The following is a 468-amino-acid chain: uncharacterized protein (468 aa).

The interval 447–468 is disordered; sequence AVHVSNGDKPKVALPDTQLGSH.

Belongs to the mycobacterial PPE family.

This is an uncharacterized protein from Mycobacterium tuberculosis (strain ATCC 25618 / H37Rv).